A 511-amino-acid polypeptide reads, in one-letter code: MSTPEPVLAGPGILLVLDGWGSADAADDNALSLARTPVLDELVAQHPSTLAEASGEAVGLLPGTVGNSEIGHMVIGAGRPLPYDSLLVQQAIDSGALRSHPRLDAVLNEVAATSGALHLIGLCSDGQIHAHVEHLSELLAAAATHQVERVFIHAITDGRDVADHTGEAYLTRVAELAAAAGTGQIATVIGRGYAMDKAGDLDLTERAVALVADGRGSPADSAHSAVHSSERGDEWVPASVLTEAGDARVADGDAVLWFNFRSDRIQQFADRLHEHLTASGRTVNMVSLAQYDTRTAIPALVKRADASGGLADELQEAGLRSVRIAETEKFEHVTYYINGRDATVRDGEEHVRITGEGKADYVAHPHMNLDRVTDAVVEAAGRVDVDLVIANLANIDVVGHTGNLAATVTACEATDAAVDQILQAARNSGRWVVAVGDHGNAERMTKQAPDGSVRPYGGHTTNPVPLVIVPNRTDTPAPTLPGTATLADVAPTILHLLGHKPGPAMTGRPLL.

Residues Asp18 and Ser68 each contribute to the Mn(2+) site. Residue Ser68 is the Phosphoserine intermediate of the active site. Substrate is bound by residues His129, 159–160 (RD), Arg191, Lys197, 261–264 (RSDR), and Lys329. Asp396, His400, Asp437, His438, and His459 together coordinate Mn(2+). The tract at residues 442-464 (ERMTKQAPDGSVRPYGGHTTNPV) is disordered.

This sequence belongs to the BPG-independent phosphoglycerate mutase family. Monomer. Mn(2+) serves as cofactor.

It catalyses the reaction (2R)-2-phosphoglycerate = (2R)-3-phosphoglycerate. The protein operates within carbohydrate degradation; glycolysis; pyruvate from D-glyceraldehyde 3-phosphate: step 3/5. In terms of biological role, catalyzes the interconversion of 2-phosphoglycerate and 3-phosphoglycerate. The sequence is that of 2,3-bisphosphoglycerate-independent phosphoglycerate mutase from Streptomyces coelicolor (strain ATCC BAA-471 / A3(2) / M145).